The following is a 175-amino-acid chain: uncharacterized protein (175 aa).

Residues 143–166 (TCFLFCAFVTSIFIETDYSIFFLL) form a helical membrane-spanning segment.

It is found in the membrane. This is an uncharacterized protein from Saccharomyces cerevisiae (strain ATCC 204508 / S288c) (Baker's yeast).